Reading from the N-terminus, the 205-residue chain is Probable thymidylate kinase (205 aa).

10-17 is an ATP binding site; sequence GIDGSGKS.

Belongs to the thymidylate kinase family.

The catalysed reaction is dTMP + ATP = dTDP + ADP. The polypeptide is Probable thymidylate kinase (Methanosarcina barkeri (strain Fusaro / DSM 804)).